The sequence spans 204 residues: Holliday junction branch migration complex subunit RuvA (204 aa).

The domain I stretch occupies residues 1 to 64 (MIGRVTGILV…EDAHLLFGFS (64 aa)). A domain II region spans residues 65-143 (HKQDRSLFRE…GLQQTDFFIK (79 aa)). Residues 144–155 (SSHLPGIKCSKL) form a flexible linker region. A domain III region spans residues 156 to 204 (DQSLQLDEAVSALIALGYKPIEAEKMVKKVLKADLTSEQLIREALKAAL).

Belongs to the RuvA family. Homotetramer. Forms an RuvA(8)-RuvB(12)-Holliday junction (HJ) complex. HJ DNA is sandwiched between 2 RuvA tetramers; dsDNA enters through RuvA and exits via RuvB. An RuvB hexamer assembles on each DNA strand where it exits the tetramer. Each RuvB hexamer is contacted by two RuvA subunits (via domain III) on 2 adjacent RuvB subunits; this complex drives branch migration. In the full resolvosome a probable DNA-RuvA(4)-RuvB(12)-RuvC(2) complex forms which resolves the HJ.

The protein localises to the cytoplasm. Its function is as follows. The RuvA-RuvB-RuvC complex processes Holliday junction (HJ) DNA during genetic recombination and DNA repair, while the RuvA-RuvB complex plays an important role in the rescue of blocked DNA replication forks via replication fork reversal (RFR). RuvA specifically binds to HJ cruciform DNA, conferring on it an open structure. The RuvB hexamer acts as an ATP-dependent pump, pulling dsDNA into and through the RuvAB complex. HJ branch migration allows RuvC to scan DNA until it finds its consensus sequence, where it cleaves and resolves the cruciform DNA. The polypeptide is Holliday junction branch migration complex subunit RuvA (Histophilus somni (strain 2336) (Haemophilus somnus)).